A 262-amino-acid chain; its full sequence is Hydroxyethylthiazole kinase (262 aa).

Met43 is a substrate binding site. Residues Arg118 and Thr164 each contribute to the ATP site. Ala191 is a substrate binding site.

The protein belongs to the Thz kinase family. Mg(2+) serves as cofactor.

The enzyme catalyses 5-(2-hydroxyethyl)-4-methylthiazole + ATP = 4-methyl-5-(2-phosphooxyethyl)-thiazole + ADP + H(+). The protein operates within cofactor biosynthesis; thiamine diphosphate biosynthesis; 4-methyl-5-(2-phosphoethyl)-thiazole from 5-(2-hydroxyethyl)-4-methylthiazole: step 1/1. In terms of biological role, catalyzes the phosphorylation of the hydroxyl group of 4-methyl-5-beta-hydroxyethylthiazole (THZ). The sequence is that of Hydroxyethylthiazole kinase from Cereibacter sphaeroides (strain KD131 / KCTC 12085) (Rhodobacter sphaeroides).